Reading from the N-terminus, the 255-residue chain is Imidazole glycerol phosphate synthase subunit HisF (255 aa).

Residues Asp-12 and Asp-131 contribute to the active site.

Belongs to the HisA/HisF family. As to quaternary structure, heterodimer of HisH and HisF.

Its subcellular location is the cytoplasm. It carries out the reaction 5-[(5-phospho-1-deoxy-D-ribulos-1-ylimino)methylamino]-1-(5-phospho-beta-D-ribosyl)imidazole-4-carboxamide + L-glutamine = D-erythro-1-(imidazol-4-yl)glycerol 3-phosphate + 5-amino-1-(5-phospho-beta-D-ribosyl)imidazole-4-carboxamide + L-glutamate + H(+). The protein operates within amino-acid biosynthesis; L-histidine biosynthesis; L-histidine from 5-phospho-alpha-D-ribose 1-diphosphate: step 5/9. In terms of biological role, IGPS catalyzes the conversion of PRFAR and glutamine to IGP, AICAR and glutamate. The HisF subunit catalyzes the cyclization activity that produces IGP and AICAR from PRFAR using the ammonia provided by the HisH subunit. This chain is Imidazole glycerol phosphate synthase subunit HisF, found in Salinispora arenicola (strain CNS-205).